A 417-amino-acid chain; its full sequence is Serine--tRNA ligase (417 aa).

Residue 232 to 234 (TAE) participates in L-serine binding. ATP is bound by residues 263-265 (RRE) and valine 279. Residue glutamate 286 coordinates L-serine. 350 to 353 (EISS) contributes to the ATP binding site. Serine 385 serves as a coordination point for L-serine.

It belongs to the class-II aminoacyl-tRNA synthetase family. Type-1 seryl-tRNA synthetase subfamily. As to quaternary structure, homodimer. The tRNA molecule binds across the dimer.

The protein localises to the cytoplasm. The catalysed reaction is tRNA(Ser) + L-serine + ATP = L-seryl-tRNA(Ser) + AMP + diphosphate + H(+). The enzyme catalyses tRNA(Sec) + L-serine + ATP = L-seryl-tRNA(Sec) + AMP + diphosphate + H(+). The protein operates within aminoacyl-tRNA biosynthesis; selenocysteinyl-tRNA(Sec) biosynthesis; L-seryl-tRNA(Sec) from L-serine and tRNA(Sec): step 1/1. Functionally, catalyzes the attachment of serine to tRNA(Ser). Is also able to aminoacylate tRNA(Sec) with serine, to form the misacylated tRNA L-seryl-tRNA(Sec), which will be further converted into selenocysteinyl-tRNA(Sec). This Leptospira borgpetersenii serovar Hardjo-bovis (strain JB197) protein is Serine--tRNA ligase.